We begin with the raw amino-acid sequence, 232 residues long: Large ribosomal subunit protein uL1 (232 aa).

Belongs to the universal ribosomal protein uL1 family. Part of the 50S ribosomal subunit.

Its function is as follows. Binds directly to 23S rRNA. The L1 stalk is quite mobile in the ribosome, and is involved in E site tRNA release. Protein L1 is also a translational repressor protein, it controls the translation of the L11 operon by binding to its mRNA. The polypeptide is Large ribosomal subunit protein uL1 (Xylella fastidiosa (strain M12)).